The primary structure comprises 402 residues: Tyrosine--tRNA ligase (402 aa).

A 'HIGH' region motif is present at residues 47–56 (PTAPDLHLGH). The 'KMSKS' region motif lies at 232–236 (KMSKS). Residue Lys235 coordinates ATP. The 61-residue stretch at 341–401 (VGVLDVLKQI…GKKRFMKLNI (61 aa)) folds into the S4 RNA-binding domain.

Belongs to the class-I aminoacyl-tRNA synthetase family. TyrS type 2 subfamily. In terms of assembly, homodimer.

It localises to the cytoplasm. It carries out the reaction tRNA(Tyr) + L-tyrosine + ATP = L-tyrosyl-tRNA(Tyr) + AMP + diphosphate + H(+). Catalyzes the attachment of tyrosine to tRNA(Tyr) in a two-step reaction: tyrosine is first activated by ATP to form Tyr-AMP and then transferred to the acceptor end of tRNA(Tyr). The chain is Tyrosine--tRNA ligase from Helicobacter pylori (strain J99 / ATCC 700824) (Campylobacter pylori J99).